The following is a 617-amino-acid chain: Protein fem-1 homolog C (617 aa).

ANK repeat units lie at residues 2-31, 40-70, 82-111, 115-144, 148-177, 181-210, and 213-242; these read DLKT…KDDV, NGAT…SVEI, EGAP…SVNN, TNST…DLEV, HGHT…DVNR, KGNT…RMEK, and YGMT…TSKN. 2 TPR repeats span residues 245-279 and 338-371; these read INAL…RHSD and SYYI…QQNN. 2 ANK repeats span residues 481 to 523 and 527 to 556; these read NNFS…DVNV and EQNS…HFDS.

It belongs to the fem-1 family. In terms of assembly, component of a CRL2 E3 ubiquitin-protein ligase complex, also named ECS (Elongin BC-CUL2/5-SOCS-box protein) complex.

It functions in the pathway protein modification; protein ubiquitination. Substrate-recognition component of a Cul2-RING (CRL2) E3 ubiquitin-protein ligase complex of the DesCEND (destruction via C-end degrons) pathway, which recognizes a C-degron located at the extreme C terminus of target proteins, leading to their ubiquitination and degradation. The C-degron recognized by the DesCEND pathway is usually a motif of less than ten residues and can be present in full-length proteins, truncated proteins or proteolytically cleaved forms. The CRL2(FEM1C) complex specifically recognizes proteins with an arginine at the C-terminus: recognizes and binds proteins ending with -Lys/Arg-Xaa-Arg and -Lys/Arg-Xaa-Xaa-Arg C-degrons, leading to their ubiquitination and degradation. In Xenopus laevis (African clawed frog), this protein is Protein fem-1 homolog C.